A 315-amino-acid polypeptide reads, in one-letter code: Acetyl-coenzyme A carboxylase carboxyl transferase subunit alpha (315 aa).

In terms of domain architecture, CoA carboxyltransferase C-terminal spans 39–293; that stretch reads RLQDKSSTLT…RGELASQLAM (255 aa).

It belongs to the AccA family. In terms of assembly, acetyl-CoA carboxylase is a heterohexamer composed of biotin carboxyl carrier protein (AccB), biotin carboxylase (AccC) and two subunits each of ACCase subunit alpha (AccA) and ACCase subunit beta (AccD).

Its subcellular location is the cytoplasm. The enzyme catalyses N(6)-carboxybiotinyl-L-lysyl-[protein] + acetyl-CoA = N(6)-biotinyl-L-lysyl-[protein] + malonyl-CoA. It participates in lipid metabolism; malonyl-CoA biosynthesis; malonyl-CoA from acetyl-CoA: step 1/1. Functionally, component of the acetyl coenzyme A carboxylase (ACC) complex. First, biotin carboxylase catalyzes the carboxylation of biotin on its carrier protein (BCCP) and then the CO(2) group is transferred by the carboxyltransferase to acetyl-CoA to form malonyl-CoA. This Pseudomonas fluorescens (strain SBW25) protein is Acetyl-coenzyme A carboxylase carboxyl transferase subunit alpha.